The chain runs to 301 residues: tRNA-cytidine(32) 2-sulfurtransferase (301 aa).

The short motif at 55-60 (SGGKDS) is the PP-loop motif element. Cys130, Cys133, and Cys221 together coordinate [4Fe-4S] cluster.

Belongs to the TtcA family. In terms of assembly, homodimer. It depends on Mg(2+) as a cofactor. [4Fe-4S] cluster serves as cofactor.

It is found in the cytoplasm. The catalysed reaction is cytidine(32) in tRNA + S-sulfanyl-L-cysteinyl-[cysteine desulfurase] + AH2 + ATP = 2-thiocytidine(32) in tRNA + L-cysteinyl-[cysteine desulfurase] + A + AMP + diphosphate + H(+). Its pathway is tRNA modification. In terms of biological role, catalyzes the ATP-dependent 2-thiolation of cytidine in position 32 of tRNA, to form 2-thiocytidine (s(2)C32). The sulfur atoms are provided by the cysteine/cysteine desulfurase (IscS) system. In Acinetobacter baumannii (strain AB307-0294), this protein is tRNA-cytidine(32) 2-sulfurtransferase.